The primary structure comprises 250 residues: Ubiquinone/menaquinone biosynthesis C-methyltransferase UbiE (250 aa).

S-adenosyl-L-methionine is bound by residues Thr-73, Asp-94, 122–123 (NA), and Ser-139.

The protein belongs to the class I-like SAM-binding methyltransferase superfamily. MenG/UbiE family.

It carries out the reaction a 2-demethylmenaquinol + S-adenosyl-L-methionine = a menaquinol + S-adenosyl-L-homocysteine + H(+). The catalysed reaction is a 2-methoxy-6-(all-trans-polyprenyl)benzene-1,4-diol + S-adenosyl-L-methionine = a 5-methoxy-2-methyl-3-(all-trans-polyprenyl)benzene-1,4-diol + S-adenosyl-L-homocysteine + H(+). The protein operates within quinol/quinone metabolism; menaquinone biosynthesis; menaquinol from 1,4-dihydroxy-2-naphthoate: step 2/2. It participates in cofactor biosynthesis; ubiquinone biosynthesis. Functionally, methyltransferase required for the conversion of demethylmenaquinol (DMKH2) to menaquinol (MKH2) and the conversion of 2-polyprenyl-6-methoxy-1,4-benzoquinol (DDMQH2) to 2-polyprenyl-3-methyl-6-methoxy-1,4-benzoquinol (DMQH2). The sequence is that of Ubiquinone/menaquinone biosynthesis C-methyltransferase UbiE from Francisella tularensis subsp. tularensis (strain FSC 198).